The primary structure comprises 112 residues: High mobility group protein D (112 aa).

The segment at residues 5–71 (PKRPLSAYML…DYDRAVKEFE (67 aa)) is a DNA-binding region (HMG box). Serine 10 is modified (phosphoserine). At tyrosine 12 the chain carries Phosphotyrosine. The segment at 72-112 (ANGGSSAANGGGAKKRAKPAKKVAKKSKKEESDEDDDDESE) is disordered. Residues 84-98 (AKKRAKPAKKVAKKS) show a composition bias toward basic residues. Serine 103 and serine 111 each carry phosphoserine. The segment covering 103–112 (SDEDDDDESE) has biased composition (acidic residues).

It belongs to the HMGB family.

The protein resides in the nucleus. It is found in the chromosome. Binds preferentially single-stranded DNA and unwinds double-stranded DNA. Prefers sites containing the sequence 5'-ttg-3'. Facilitates DNA bending. Associated with early embryonic chromatin in the absence of histone H1. This chain is High mobility group protein D (HmgD), found in Drosophila melanogaster (Fruit fly).